A 434-amino-acid polypeptide reads, in one-letter code: Histidinol dehydrogenase (434 aa).

NAD(+) contacts are provided by tyrosine 129, glutamine 191, and asparagine 214. Positions 240, 262, and 265 each coordinate substrate. Glutamine 262 and histidine 265 together coordinate Zn(2+). Residues glutamate 329 and histidine 330 each act as proton acceptor in the active site. Histidine 330, aspartate 363, glutamate 417, and histidine 422 together coordinate substrate. Aspartate 363 lines the Zn(2+) pocket. Histidine 422 contributes to the Zn(2+) binding site.

The protein belongs to the histidinol dehydrogenase family. Zn(2+) serves as cofactor.

It carries out the reaction L-histidinol + 2 NAD(+) + H2O = L-histidine + 2 NADH + 3 H(+). It functions in the pathway amino-acid biosynthesis; L-histidine biosynthesis; L-histidine from 5-phospho-alpha-D-ribose 1-diphosphate: step 9/9. Catalyzes the sequential NAD-dependent oxidations of L-histidinol to L-histidinaldehyde and then to L-histidine. In Colwellia psychrerythraea (strain 34H / ATCC BAA-681) (Vibrio psychroerythus), this protein is Histidinol dehydrogenase.